We begin with the raw amino-acid sequence, 542 residues long: Aspartate kinase FUB3 (542 aa).

2 ACT domains span residues 404–472 (ILSN…VLPD) and 478–542 (LVGA…KSAI).

The protein belongs to the aspartokinase family.

It catalyses the reaction L-aspartate + ATP = 4-phospho-L-aspartate + ADP. Its pathway is mycotoxin biosynthesis. Aspartate kinase; part of the gene cluster that mediates the biosynthesis of fusaric acid, a mycotoxin with low to moderate toxicity to animals and humans, but with high phytotoxic properties. L-aspartate is suggested as fusaric acid amino acid precursor that is activated and further processed to O-acetyl-L-homoserine by cluster enzymes aspartate kinase FUB3 and homoserine O-acetyltransferase FUB5, as well as enzymes of the primary metabolism. The polyketide synthase (PKS) FUB1 generates the triketide trans-2-hexenal which is presumptively released by the hydrolase FUB4 and linked to the NRPS-bound amino acid precursor by NAD(P)-dependent dehydrogenase FUB6. FUB1, FUB4, and the non-canonical NRPS Fub8 may form an enzyme complex. Further processing of the NRPS-bound intermediate might be carried out by FUB6 and the sulfhydrylase FUB7, enabling a spontaneous electrocyclization to close the carbon backbone of fusaric acid. Dihydrofusaric acid is likely to be released via reduction by the thioester reductase (TR) domain of FUB8 whereupon the final oxidation to fusaric acid may (also) be performed by the FMN-dependent dehydrogenase FUB9. This is Aspartate kinase FUB3 from Fusarium oxysporum f. sp. lycopersici (strain 4287 / CBS 123668 / FGSC 9935 / NRRL 34936) (Fusarium vascular wilt of tomato).